Consider the following 194-residue polypeptide: Large ribosomal subunit protein eL15 (194 aa).

Residues 161–194 (GLTSAGKKGRGLMYKGKGAEKARPSVRANGKKTK) are disordered.

It belongs to the eukaryotic ribosomal protein eL15 family.

The chain is Large ribosomal subunit protein eL15 from Methanococcus maripaludis (strain C5 / ATCC BAA-1333).